The chain runs to 437 residues: UDP-N-acetylmuramate--L-alanine ligase (437 aa).

108–114 (GAHGKTS) contacts ATP.

This sequence belongs to the MurCDEF family.

It is found in the cytoplasm. It catalyses the reaction UDP-N-acetyl-alpha-D-muramate + L-alanine + ATP = UDP-N-acetyl-alpha-D-muramoyl-L-alanine + ADP + phosphate + H(+). Its pathway is cell wall biogenesis; peptidoglycan biosynthesis. Functionally, cell wall formation. This chain is UDP-N-acetylmuramate--L-alanine ligase, found in Staphylococcus haemolyticus (strain JCSC1435).